The following is an 873-amino-acid chain: Zinc fingers and homeoboxes protein 1 (873 aa).

Positions 24–63 (LISDLDEGPPVLTPVENTRAESISSDEEVHESVDSDNQQN) are disordered. T36 carries the phosphothreonine modification. 3 positions are modified to phosphoserine: S45, S47, and S48. C2H2-type zinc fingers lie at residues 70-93 (YECK…DSEH) and 102-125 (YVCV…LKYH). K159 participates in a covalent cross-link: Glycyl lysine isopeptide (Lys-Gly) (interchain with G-Cter in SUMO2). The residue at position 202 (S202) is a Phosphoserine. The interval 202 to 236 (SVEDVPEEKENEIKPDREEIVENPSSSASESNTST) is disordered. The segment covering 212–221 (NEIKPDREEI) has biased composition (basic and acidic residues). Low complexity predominate over residues 223–236 (ENPSSSASESNTST). The interval 272–432 (NSNLIPKVLI…QNNIQKSQVP (161 aa)) is required for dimerization. The required for interaction with NFYA stretch occupies residues 272–564 (NSNLIPKVLI…AQPKQSWNPF (293 aa)). The segment at residues 284–346 (NSIPTYNAAL…LKHGVSWTPE (63 aa)) is a DNA-binding region (homeobox 1). Glycyl lysine isopeptide (Lys-Gly) (interchain with G-Cter in SUMO2) cross-links involve residues K441, K454, K485, and K629. 2 DNA-binding regions (homeobox) span residues 464–526 (SFGI…KSNQ) and 569–630 (PQKF…EEKM). 2 disordered regions span residues 626–667 (KEEK…ICKK) and 732–770 (SSMN…NNWD). At S648 the chain carries Phosphoserine. Residues 660–722 (STGKICKKTP…YAWKNGNLKW (63 aa)) constitute a DNA-binding region (homeobox 4). The interval 734-768 (MNGLSSLRKRGRGRPKGRGRGRPRGRPRGSKRINN) is required for nuclear localization. The span at 740 to 764 (LRKRGRGRPKGRGRGRPRGRPRGSK) shows a compositional bias: basic residues. S774 is modified (phosphoserine). Positions 777–832 (KFKTGTAILKDYYLKHKFLNEQDLDELVNKSHMGYEQVREWFAERQRRSELGIELF) form a DNA-binding region, homeobox 5. The disordered stretch occupies residues 829–873 (IELFEENEEEDEVIDDQEEDEEETDDSDTWEPPRHVKRKLSKSDD). Over residues 831–857 (LFEENEEEDEVIDDQEEDEEETDDSDT) the composition is skewed to acidic residues. A required for repressor activity region spans residues 831 to 873 (LFEENEEEDEVIDDQEEDEEETDDSDTWEPPRHVKRKLSKSDD). A compositionally biased stretch (basic residues) spans 863 to 873 (HVKRKLSKSDD).

The protein belongs to the ZHX family. In terms of assembly, forms homodimers. Heterodimer (via HD1 domain) with ZHX2 (via HD1 domain). Also forms a heterodimer with ZHX3 which is a prerequisite for repressor activity. Interacts with ATF7IP and NFYA. Interacts (via homeobox domains) with DNMT3B (via PWWP domain). In terms of tissue distribution, ubiquitously expressed. Expressed in podocytes.

It localises to the nucleus. In terms of biological role, acts as a transcriptional repressor. Increases DNMT3B-mediated repressive transcriptional activity when DNMT3B is tethered to DNA. May link molecule between DNMT3B and other co-repressor proteins. In Homo sapiens (Human), this protein is Zinc fingers and homeoboxes protein 1 (ZHX1).